The sequence spans 183 residues: TATA-box-binding protein (183 aa).

2 tandem repeats follow at residues 8-84 and 99-175.

It belongs to the TBP family.

Functionally, general factor that plays a role in the activation of archaeal genes transcribed by RNA polymerase. Binds specifically to the TATA box promoter element which lies close to the position of transcription initiation. The chain is TATA-box-binding protein from Methanosphaera stadtmanae (strain ATCC 43021 / DSM 3091 / JCM 11832 / MCB-3).